The primary structure comprises 460 residues: A-type ATP synthase subunit B (460 aa).

This sequence belongs to the ATPase alpha/beta chains family. As to quaternary structure, has multiple subunits with at least A(3), B(3), C, D, E, F, H, I and proteolipid K(x).

It localises to the cell membrane. Its function is as follows. Component of the A-type ATP synthase that produces ATP from ADP in the presence of a proton gradient across the membrane. The B chain is a regulatory subunit. This is A-type ATP synthase subunit B from Thermoplasma acidophilum (strain ATCC 25905 / DSM 1728 / JCM 9062 / NBRC 15155 / AMRC-C165).